Consider the following 500-residue polypeptide: ATP synthase subunit beta (500 aa).

157-164 (GGAGVGKT) contributes to the ATP binding site.

The protein belongs to the ATPase alpha/beta chains family. In terms of assembly, F-type ATPases have 2 components, CF(1) - the catalytic core - and CF(0) - the membrane proton channel. CF(1) has five subunits: alpha(3), beta(3), gamma(1), delta(1), epsilon(1). CF(0) has three main subunits: a(1), b(2) and c(9-12). The alpha and beta chains form an alternating ring which encloses part of the gamma chain. CF(1) is attached to CF(0) by a central stalk formed by the gamma and epsilon chains, while a peripheral stalk is formed by the delta and b chains.

The protein resides in the cell inner membrane. The catalysed reaction is ATP + H2O + 4 H(+)(in) = ADP + phosphate + 5 H(+)(out). Functionally, produces ATP from ADP in the presence of a proton gradient across the membrane. The catalytic sites are hosted primarily by the beta subunits. The chain is ATP synthase subunit beta from Salinibacter ruber (strain DSM 13855 / M31).